A 255-amino-acid chain; its full sequence is MSSDISNNDHLVLSDNPDHPANLIPSLCAKFWTLGWVTGTGGGCSIRENDLVYIAPSGVQKELMKAADIYVLSLAAQTASLRDRVYLRSPPCYKPSQCTPLFLAAFTKRRAGCCIHTHSQWAVLVTLILEAGGGPGGAEDAREFRINNIEQIKGFGKGFEKSGNLGYHDTLRIPVIENTAHEEDLTEFLEEAMDKYPDTYAVLVRRHGVYVWGDNVHKAKTQCESLDYLFQLAVEMKKMSLPWITDITPVKTRRS.

Cysteine 98 lines the substrate pocket. Residues histidine 116 and histidine 118 each contribute to the Zn(2+) site. Glutamate 150 serves as the catalytic Proton donor/acceptor. Position 207 (histidine 207) interacts with Zn(2+).

The protein belongs to the aldolase class II family. MtnB subfamily. Zn(2+) serves as cofactor.

It localises to the cytoplasm. The enzyme catalyses 5-(methylsulfanyl)-D-ribulose 1-phosphate = 5-methylsulfanyl-2,3-dioxopentyl phosphate + H2O. Its pathway is amino-acid biosynthesis; L-methionine biosynthesis via salvage pathway; L-methionine from S-methyl-5-thio-alpha-D-ribose 1-phosphate: step 2/6. Its function is as follows. Catalyzes the dehydration of methylthioribulose-1-phosphate (MTRu-1-P) into 2,3-diketo-5-methylthiopentyl-1-phosphate (DK-MTP-1-P). This chain is Methylthioribulose-1-phosphate dehydratase, found in Pyricularia oryzae (strain 70-15 / ATCC MYA-4617 / FGSC 8958) (Rice blast fungus).